Reading from the N-terminus, the 529-residue chain is Protein PNS1 (529 aa).

The disordered stretch occupies residues 1-58; the sequence is MSQQYSYGGGGGAGYPPPQMQPPNSYAQANYQGQPQGAQNQYYNGQQPHHNAPQQYYG. Residues 1 to 84 are Cytoplasmic-facing; that stretch reads MSQQYSYGGG…LQPKPKFRDP (84 aa). Over residues 22–48 the composition is skewed to low complexity; the sequence is PPNSYAQANYQGQPQGAQNQYYNGQQP. Residues 85–105 form a helical membrane-spanning segment; sequence IFLVLFLLVFAGFIALSVICL. The Extracellular portion of the chain corresponds to 106-132; the sequence is RSYSNADVNVSIGRANVAGSTLNGHTA. The N-linked (GlcNAc...) asparagine glycan is linked to Asn-114. The chain crosses the membrane as a helical span at residues 133–153; it reads IMFMICCAVALVLSFVYILLV. Topologically, residues 154-158 are cytoplasmic; it reads RTFPK. The chain crosses the membrane as a helical span at residues 159-179; it reads IILEATLLLTTLSNVAFCVYL. The Extracellular segment spans residues 180 to 184; it reads WVRGN. A helical transmembrane segment spans residues 185-205; sequence TAAAIIFTIFAVLSVIAYFFM. The Cytoplasmic portion of the chain corresponds to 206–230; sequence RKRIPLAKLILVTVIRTAEQYKSVY. Residues 231-251 traverse the membrane as a helical segment; sequence VVALGGLIVETAFSAWTSWVV. Residues 252-271 lie on the Extracellular side of the membrane; it reads VAAYQRFEPSGQAAGSSSSN. N-linked (GlcNAc...) asparagine glycosylation is present at Asn-271. A helical transmembrane segment spans residues 272–292; that stretch reads ASIIGIMVFIVFAYYWISEVI. Topologically, residues 293 to 294 are cytoplasmic; that stretch reads KN. Residues 295–315 traverse the membrane as a helical segment; the sequence is IAFTTVAGIFGVAYYNANKVA. Topologically, residues 316 to 325 are extracellular; the sequence is NAAWGAFRRS. A helical transmembrane segment spans residues 326–346; it reads MTYSLGSICFGSLIVAILDLL. Residues 347–362 lie on the Cytoplasmic side of the membrane; the sequence is RALFNILQSQAASDGD. A helical transmembrane segment spans residues 363–383; sequence MTGQILACVAGCCVSCIQGLV. The Extracellular portion of the chain corresponds to 384–427; it reads DYFNRYAYINIALYGNGYITAAKETWALLKDRGIDAIINDSLVN. N-linked (GlcNAc...) asparagine glycosylation occurs at Asn-422. The helical transmembrane segment at 428-448 threads the bilayer; that stretch reads IVFNCGAFIIGLLTALFAFIY. Residues 449–464 are Cytoplasmic-facing; it reads EQLTNPRYLQNDAGYY. The chain crosses the membrane as a helical span at residues 465-485; that stretch reads SIVLLVAFGLGFNIALSVGAG. Over 486 to 529 the chain is Extracellular; that stretch reads SIASGVSTYFVALAEDPYILQGKNPELFEMIRQQYPQVVQGVNH.

Belongs to the CTL (choline transporter-like) family.

The protein resides in the cell membrane. Its function is as follows. Probably involved in transport through the plasma membrane. In Mycosarcoma maydis (Corn smut fungus), this protein is Protein PNS1 (PNS1).